Here is a 346-residue protein sequence, read N- to C-terminus: DNA primase small subunit PriS (346 aa).

Active-site residues include Asp97, Asp99, and Asp280.

Belongs to the eukaryotic-type primase small subunit family. In terms of assembly, heterodimer of a small subunit (PriS) and a large subunit (PriL). Mg(2+) serves as cofactor. Mn(2+) is required as a cofactor.

Catalytic subunit of DNA primase, an RNA polymerase that catalyzes the synthesis of short RNA molecules used as primers for DNA polymerase during DNA replication. The small subunit contains the primase catalytic core and has DNA synthesis activity on its own. Binding to the large subunit stabilizes and modulates the activity, increasing the rate of DNA synthesis while decreasing the length of the DNA fragments, and conferring RNA synthesis capability. The DNA polymerase activity may enable DNA primase to also catalyze primer extension after primer synthesis. May also play a role in DNA repair. This chain is DNA primase small subunit PriS, found in Thermococcus kodakarensis (strain ATCC BAA-918 / JCM 12380 / KOD1) (Pyrococcus kodakaraensis (strain KOD1)).